Here is a 767-residue protein sequence, read N- to C-terminus: Ribonucleoside-diphosphate reductase subunit alpha (767 aa).

Positions 1 to 30 (MHPTLISAPISSSANDAHAGTSQGSHQGHR) are disordered. Over residues 9 to 26 (PISSSANDAHAGTSQGSH) the composition is skewed to polar residues. Positions 31-120 (IQVIRRDGSS…VWSLWKDTLV (90 aa)) constitute an ATP-cone domain. Residues Thr-228, 243 to 244 (SC), Gly-272, 460 to 464 (NLCCE), and 631 to 635 (PNTSS) each bind substrate. A disulfide bridge links Cys-244 with Cys-478. Residue Asn-460 is the Proton acceptor of the active site. The active-site Cysteine radical intermediate is the Cys-462. The active-site Proton acceptor is the Glu-464.

This sequence belongs to the ribonucleoside diphosphate reductase large chain family. As to quaternary structure, tetramer of two alpha and two beta subunits.

It carries out the reaction a 2'-deoxyribonucleoside 5'-diphosphate + [thioredoxin]-disulfide + H2O = a ribonucleoside 5'-diphosphate + [thioredoxin]-dithiol. Its activity is regulated as follows. Under complex allosteric control mediated by deoxynucleoside triphosphates and ATP binding. The type of nucleotide bound at the specificity site determines substrate preference. It seems probable that ATP makes the enzyme reduce CDP and UDP, dGTP favors ADP reduction and dTTP favors GDP reduction. In terms of biological role, provides the precursors necessary for DNA synthesis. Catalyzes the biosynthesis of deoxyribonucleotides from the corresponding ribonucleotides. This is Ribonucleoside-diphosphate reductase subunit alpha (nrdA) from Synechocystis sp. (strain ATCC 27184 / PCC 6803 / Kazusa).